The primary structure comprises 132 residues: Small ribosomal subunit protein uS8 (132 aa).

It belongs to the universal ribosomal protein uS8 family. As to quaternary structure, part of the 30S ribosomal subunit. Contacts proteins S5 and S12.

One of the primary rRNA binding proteins, it binds directly to 16S rRNA central domain where it helps coordinate assembly of the platform of the 30S subunit. This Xylella fastidiosa (strain M12) protein is Small ribosomal subunit protein uS8.